A 132-amino-acid polypeptide reads, in one-letter code: Fluoride-specific ion channel FluC 2 (132 aa).

The next 4 helical transmembrane spans lie at 5-25 (VAVF…NLLG), 34-54 (TFIE…FFAA), 59-79 (PLVQ…MSAF), and 95-115 (VLYL…GIVI). Na(+)-binding residues include glycine 71 and threonine 74.

It belongs to the fluoride channel Fluc/FEX (TC 1.A.43) family.

The protein localises to the cell membrane. It carries out the reaction fluoride(in) = fluoride(out). Its activity is regulated as follows. Na(+) is not transported, but it plays an essential structural role and its presence is essential for fluoride channel function. Fluoride-specific ion channel. Important for reducing fluoride concentration in the cell, thus reducing its toxicity. This chain is Fluoride-specific ion channel FluC 2, found in Bacillus licheniformis (strain ATCC 14580 / DSM 13 / JCM 2505 / CCUG 7422 / NBRC 12200 / NCIMB 9375 / NCTC 10341 / NRRL NRS-1264 / Gibson 46).